A 350-amino-acid polypeptide reads, in one-letter code: MKVKAPGRINIIGEHTDYNDGYVLPFAVNRYVFLSIEGSERFIFHSENVNETVEMEKIEKLNKWTDYISGVIASFEKRGYRVSPVKISVSSNLPIGAGLSSSAALEVATAYAISEYFGFNVPKLELVKIAREAEVEFVGVRCGIMDQFTAVFGKKDHAIFLDTMTLEYEYVPLKLEGYEINLVDSNVKHELSSSEYNRRRQECEEVLKTLEKKSFREVTKEDLERLSGTLRKRAQHVLEENERVLKSVQALKEGDFETLGKLLFSSHESLRDLYEVSCEETDFIVDYLRGKEGILGARMVGGGFGGGVIVLSKKGAFGKIKEELVESYRKRFGIDLIFHEIESSDGVQKI.

14–17 provides a ligand contact to substrate; the sequence is EHTD. Residues Ser46 and 96–102 contribute to the ATP site; that span reads GAGLSSS. Mg(2+) contacts are provided by Ser102 and Glu134. Catalysis depends on Asp146, which acts as the Proton acceptor. Tyr196 lines the substrate pocket.

The protein belongs to the GHMP kinase family. GalK subfamily.

Its subcellular location is the cytoplasm. It catalyses the reaction alpha-D-galactose + ATP = alpha-D-galactose 1-phosphate + ADP + H(+). It participates in carbohydrate metabolism; galactose metabolism. Catalyzes the transfer of the gamma-phosphate of ATP to D-galactose to form alpha-D-galactose-1-phosphate (Gal-1-P). The sequence is that of Galactokinase from Thermotoga maritima (strain ATCC 43589 / DSM 3109 / JCM 10099 / NBRC 100826 / MSB8).